We begin with the raw amino-acid sequence, 510 residues long: Probable cytochrome P450 517A2 (510 aa).

A helical membrane pass occupies residues 1–21 (MRILIIIILIIIVFLVKDTIK). A heme-binding site is contributed by C450.

The protein belongs to the cytochrome P450 family. Heme is required as a cofactor.

It localises to the membrane. This Dictyostelium discoideum (Social amoeba) protein is Probable cytochrome P450 517A2 (cyp517A2).